The chain runs to 149 residues: Large ribosomal subunit protein uL13 (149 aa).

The protein belongs to the universal ribosomal protein uL13 family. Part of the 50S ribosomal subunit.

This protein is one of the early assembly proteins of the 50S ribosomal subunit, although it is not seen to bind rRNA by itself. It is important during the early stages of 50S assembly. In Bifidobacterium longum (strain DJO10A), this protein is Large ribosomal subunit protein uL13.